Here is a 159-residue protein sequence, read N- to C-terminus: Transcription elongation factor A protein-like 1 (159 aa).

Residues 1-120 (MEKACKEPEE…PQFRGDIHGR (120 aa)) form a disordered region. A compositionally biased stretch (basic and acidic residues) spans 17–34 (KADEERPSVEPSPEKSSP). The segment covering 37–54 (QSSEEVSSEEEFFPDELL) has biased composition (acidic residues). Composition is skewed to basic and acidic residues over residues 64–80 (SEER…DLFE) and 95–119 (HKLE…DIHG).

This sequence belongs to the TFS-II family. TFA subfamily.

Its subcellular location is the nucleus. In terms of biological role, may be involved in transcriptional regulation. Modulates various viral and cellular promoters in a promoter context-dependent manner. Does not bind DNA directly. This is Transcription elongation factor A protein-like 1 from Bos taurus (Bovine).